Reading from the N-terminus, the 127-residue chain is Putative iron-sulfur cluster insertion protein ErpA (127 aa).

Over residues 1 to 14 the composition is skewed to polar residues; sequence MNTPFNDGSGQTDP. The segment at 1–20 is disordered; it reads MNTPFNDGSGQTDPMTDIPT. Residues Cys55, Cys119, and Cys121 each coordinate iron-sulfur cluster.

The protein belongs to the HesB/IscA family. Homodimer. Iron-sulfur cluster is required as a cofactor.

In terms of biological role, required for insertion of 4Fe-4S clusters. In Nitrosospira multiformis (strain ATCC 25196 / NCIMB 11849 / C 71), this protein is Putative iron-sulfur cluster insertion protein ErpA.